The primary structure comprises 116 residues: Chondroitin proteoglycan 7 (116 aa).

The first 19 residues, 1–19 (MQTITILALIACVAVPIFA), serve as a signal peptide directing secretion. The tract at residues 29-102 (DVVESSGEGS…NAVVASDSPK (74 aa)) is disordered. Low complexity-rich tracts occupy residues 32–41 (ESSGEGSGES) and 48–58 (VESSGEGSGES). Ser-68, Ser-72, Ser-76, Ser-84, and Ser-88 each carry an O-linked (Xyl...) (chondroitin sulfate) serine glycan.

This is Chondroitin proteoglycan 7 from Caenorhabditis elegans.